Reading from the N-terminus, the 64-residue chain is Large ribosomal subunit protein bL35 (64 aa).

This sequence belongs to the bacterial ribosomal protein bL35 family.

The polypeptide is Large ribosomal subunit protein bL35 (Ectopseudomonas mendocina (strain ymp) (Pseudomonas mendocina)).